Here is a 658-residue protein sequence, read N- to C-terminus: ATP-dependent DNA helicase Rep (658 aa).

The UvrD-like helicase ATP-binding domain occupies 1-280 (MSLNFNQKNA…IKMEQNYRSY (280 aa)). Residues 22-29 (AGAGSGKT) and Arg-278 each bind ATP. Positions 281–564 (GRILKAANKL…QLMTLHSSKG (284 aa)) constitute a UvrD-like helicase C-terminal domain.

This sequence belongs to the helicase family. UvrD subfamily. In terms of assembly, homodimer.

The catalysed reaction is Couples ATP hydrolysis with the unwinding of duplex DNA by translocating in the 3'-5' direction.. The enzyme catalyses ATP + H2O = ADP + phosphate + H(+). Functionally, rep helicase is a single-stranded DNA-dependent ATPase involved in DNA replication; it can initiate unwinding at a nick in the DNA. It binds to the single-stranded DNA and acts in a progressive fashion along the DNA in the 3' to 5' direction. This is ATP-dependent DNA helicase Rep from Buchnera aphidicola subsp. Schizaphis graminum (strain Sg).